A 192-amino-acid chain; its full sequence is UPF0312 protein Spro_1887 (192 aa).

The first 23 residues, 1 to 23 (MLKKTVLGLTAGAMLLSAGSALA), serve as a signal peptide directing secretion.

It belongs to the UPF0312 family. Type 1 subfamily.

The protein localises to the periplasm. This is UPF0312 protein Spro_1887 from Serratia proteamaculans (strain 568).